We begin with the raw amino-acid sequence, 403 residues long: Dynactin subunit 2 (403 aa).

Positions 1–26 (MADPKYADLPGIARNEPDVYETSDLP) are disordered. A2 is modified (N-acetylalanine). Y6 bears the Phosphotyrosine mark. A Phosphoserine modification is found at S83. Y86 bears the Phosphotyrosine mark. Positions 100-130 (QQKYQRLLHEVQELTTEVEKIKTTVKESATE) form a coiled coil. Phosphothreonine occurs at positions 134 and 200. The interval 184-204 (TKNSKGTGSGGKTTSGTPPDS) is disordered. Residues 216–248 (EQDKFSQAAKVAELEKRLTELEATVRCDQDAQN) adopt a coiled-coil conformation. S322 is subject to Phosphoserine.

It belongs to the dynactin subunit 2 family. As to quaternary structure, subunit of dynactin, a multiprotein complex part of a tripartite complex with dynein and a adapter, such as BICDL1, BICD2 or HOOK3. The dynactin complex is built around ACTR1A/ACTB filament and consists of an actin-related filament composed of a shoulder domain, a pointed end and a barbed end. Its length is defined by its flexible shoulder domain. The soulder is composed of 2 DCTN1 subunits, 4 DCTN2 and 2 DCTN3. The 4 DCNT2 (via N-terminus) bind the ACTR1A filament and act as molecular rulers to determine the length. The pointed end is important for binding dynein-dynactin cargo adapters and consists of 4 subunits: ACTR10, DCNT4, DCTN5 and DCTN6. The barbed end is composed of a CAPZA1:CAPZB heterodimers, which binds ACTR1A/ACTB filament and dynactin and stabilizes dynactin. Interacts with BICD2 and CEP135. Interacts with DYNAP. Interacts with ECPAS. Interacts with MAPRE1.

It localises to the cytoplasm. The protein resides in the cytoskeleton. Its subcellular location is the microtubule organizing center. It is found in the centrosome. The protein localises to the membrane. In terms of biological role, part of the dynactin complex that activates the molecular motor dynein for ultra-processive transport along microtubules. In the dynactin soulder domain, binds the ACTR1A filament and acts as a molecular ruler to determine the length. Modulates cytoplasmic dynein binding to an organelle, and plays a role in prometaphase chromosome alignment and spindle organization during mitosis. Involved in anchoring microtubules to centrosomes. May play a role in synapse formation during brain development. The chain is Dynactin subunit 2 (DCTN2) from Bos taurus (Bovine).